Reading from the N-terminus, the 59-residue chain is Large ribosomal subunit protein bL32c (59 aa).

The disordered stretch occupies residues 1–20 (MAVPKKRTSKSKKRIRKSVW).

This sequence belongs to the bacterial ribosomal protein bL32 family.

The protein resides in the plastid. Its subcellular location is the chloroplast. This is Large ribosomal subunit protein bL32c from Angiopteris evecta (Mule's foot fern).